Here is a 214-residue protein sequence, read N- to C-terminus: Dephospho-CoA kinase (214 aa).

Residues 20-214 enclose the DPCK domain; sequence RIGITGGIAS…KLQLKKLYKF (195 aa). 28 to 33 is an ATP binding site; that stretch reads ASGKTI.

This sequence belongs to the CoaE family.

The protein resides in the cytoplasm. It carries out the reaction 3'-dephospho-CoA + ATP = ADP + CoA + H(+). Its pathway is cofactor biosynthesis; coenzyme A biosynthesis; CoA from (R)-pantothenate: step 5/5. Functionally, catalyzes the phosphorylation of the 3'-hydroxyl group of dephosphocoenzyme A to form coenzyme A. This Prochlorococcus marinus (strain NATL2A) protein is Dephospho-CoA kinase.